The following is a 131-amino-acid chain: Profilin-1 (131 aa).

It belongs to the profilin family. As to quaternary structure, occurs in many kinds of cells as a complex with monomeric actin in a 1:1 ratio.

Its subcellular location is the cytoplasm. It localises to the cytoskeleton. Functionally, binds to actin and affects the structure of the cytoskeleton. At high concentrations, profilin prevents the polymerization of actin, whereas it enhances it at low concentrations. By binding to PIP2, it inhibits the formation of IP3 and DG. In Hordeum vulgare (Barley), this protein is Profilin-1 (PRO1).